A 389-amino-acid polypeptide reads, in one-letter code: MFSPDGGLPAAPFGLLPDGGPPFPRGGYDGAAAQQLFFPFASEPDGARDAATARAWLPPPAGPPAKAEARPARPCRQGSPEPRAAPPATPCCGPAWAAPPWPGPAPPAATAVPGPPFPGPAAAAFPAAPGHALCPAALQPSSGGLANLGSSGSSSGAASEGGHSSDSGDEDAPTSEELEQFAKDLKHKRIMLGFTQADVGLALGTLYGKMFSQTTICRFEALQLSFKNMCKLKPLLQRWLNEAENTDNMQEMCNAEQVLAQARKRKRRTSIETNVKGTLESFFRKCVKPSPQEISQIAEDLNLDKDVVRVWFCNRRQKGKRLLLPFGNESEGVMYDMNQSLVPPGLPIPVTSQGYSLAPSPPVYMPPFHKAEMFPPPLQPGISMNNSSH.

2 stretches are compositionally biased toward low complexity: residues 1 to 18 (MFSPDGGLPAAPFGLLPD) and 145 to 165 (LANLGSSGSSSGAASEGGHSS). 2 disordered regions span residues 1 to 88 (MFSP…APPA) and 145 to 177 (LANLGSSGSSSGAASEGGHSSDSGDEDAPTSEE). Residues 167-177 (SGDEDAPTSEE) show a composition bias toward acidic residues. The region spanning 170–244 (EDAPTSEELE…LLQRWLNEAE (75 aa)) is the POU-specific domain. Positions 264-323 (KRKRRTSIETNVKGTLESFFRKCVKPSPQEISQIAEDLNLDKDVVRVWFCNRRQKGKRLL) form a DNA-binding region, homeobox.

This sequence belongs to the POU transcription factor family.

The protein resides in the nucleus. Its function is as follows. Required for the maintenance of pluripotency and self-renewal of embryonic stem cells. Transcriptional activator that binds the DNA consensus sequence 5'-ATGCAAAT-3'. The sequence is that of POU domain, class 5, transcription factor 3 (POU5F3) from Gallus gallus (Chicken).